The following is a 1002-amino-acid chain: MSKGGEHKRVTLTSIIQGDAGFSRFGSNILEPDAASAAPDNSSKPTTKTAKCIRIKLDLFETDSNKYPEFNYSRLLYLEKKKTKKLKQVSTTNGSASTDPFADNDDDVARIVKELEAKYGNSYATGRGKSKKDDYRDIGMGYDESDSFIDNTEAYDEIIPEEAETLEGGFYINCGALEFKNLTKKSYTTRTDAIIKMPERSRKRMVSSSSESSSSSSGDDDENDDGNNEEDDESDSEDDSEENDESDSEDDSESESLEDEDSAATAKSSSKYKDNHQAKRAKVIVTGKSKPSSSSLTSGKKPPTKPITTSSSSNSPRPSTVEISDTEDGQDPIQTQPSSQLQSLPQSQAQAQALKKVVKTTTVKDMLKAKRDSFLKSQSGTAAVKGVGNGELKCVSTDVSSSDSSDMESEHGRADRQAGQHGKDGQENLRTADTLLPTTLDADIVTAVNSFKEAVKSRDMCGKKFNLDVKLSPLLLRVYEAVLCTDRNERNMVFSHIEYQLQLPKYYMLRKGKQVRAKEEKRKSTIMLEKLRRAVAVVMPKAVANYETELRTFAEQAAADVNSELPPKMPRKKFQWTSELRHLLYDVYQARWTSYAFLAKRKESLEEFINWYLKEKVVELWPPGWMRLDELQREITRYKNAKLKAKEKPKAPPASASPKPVGVVSAPEQMPPASSYLKAVEDPRSRGNSDTDSATSASSNSLKRKLKEMPKQTSKPPKKKVAKQVPLQPQLTPHPQFQLAPAATAAVSIPAISNNNNHLPHLDTLLSMPSTSAQAAALNAAAVAAASTVLDLASPSRKIDLNTSNNFYNLITAASLAASGNPSPHSGDGQAKVIVGARPSPHVINLDDYQCTSDILQTSKQLAATTTVITAISKAAQTTSVARESSSESDGVEIVGVFPASKPQKKVQSKPKNKTQNRGRSSLGAVGQVNGSLGYSANNMYIYNSPRTLGPVYDLTDPHIMKTMSNLKEMEKQFIQAAFSPNSVKGASGGMGSSAPSTPTRQ.

Residues 80 to 85 (KKKTKK) carry the Nuclear localization signal motif. 3 disordered regions span residues 193 to 358 (AIIK…KKVV), 395 to 428 (VSTD…GQEN), and 642 to 725 (KLKA…AKQV). Low complexity predominate over residues 207-217 (SSSSESSSSSS). Over residues 218–262 (GDDDENDDGNNEEDDESDSEDDSEENDESDSEDDSESESLEDEDS) the composition is skewed to acidic residues. 2 tandem repeats follow at residues 230–241 (EDDESDSEDDSE) and 242–253 (ENDESDSEDDSE). The tract at residues 230-253 (EDDESDSEDDSEENDESDSEDDSE) is 2 X 12 AA tandem repeats. Composition is skewed to low complexity over residues 286–320 (TGKS…RPST), 336–358 (QPSS…KKVV), and 395–404 (VSTDVSSSDS). Basic and acidic residues predominate over residues 408 to 427 (ESEHGRADRQAGQHGKDGQE). Residues 653 to 667 (PASASPKPVGVVSAP) show a composition bias toward low complexity. A compositionally biased stretch (basic and acidic residues) spans 679-689 (AVEDPRSRGNS). Serine 685 and serine 689 each carry phosphoserine. Residues 690–701 (DTDSATSASSNS) are compositionally biased toward low complexity. Serine 885, serine 886, and serine 887 each carry phosphoserine. Positions 901 to 928 (SKPQKKVQSKPKNKTQNRGRSSLGAVGQ) are disordered. A compositionally biased stretch (basic residues) spans 903 to 917 (PQKKVQSKPKNKTQN).

In terms of processing, the N-terminus is blocked. In terms of tissue distribution, oocyte specific.

It localises to the nucleus. The protein resides in the nucleoplasm. The protein localises to the chromosome. Its subcellular location is the centromere. It is found in the kinetochore. May play a key role in egg organization. May be a transcriptional regulator having a role in chromatin remodeling in concert with Hira, a histone chaperone. Involved in chromosome segregation by affecting kinetochores function in the first meiotic division. This is yemanuclein from Drosophila melanogaster (Fruit fly).